A 492-amino-acid polypeptide reads, in one-letter code: High-affinity nickel transport protein (492 aa).

The Cytoplasmic segment spans residues 1–24 (MLSRWTRRVNESRLAQRKLTLLGR). Residues 25-45 (AIALVVGELLFNAVCWIAAGI) traverse the membrane as a helical segment. Topologically, residues 46-50 (CFGKT) are extracellular. The chain crosses the membrane as a helical span at residues 51 to 71 (DGILGLALLAWTIGLRHGLDA). Topologically, residues 72 to 94 (DHISAIDNATRQLVSQGQLPITC) are cytoplasmic. The chain crosses the membrane as a helical span at residues 95–115 (GLFFSLGHSTIVIVVNVAIAV). Topologically, residues 116 to 136 (SVDIYDKLDRVGSIGGIVGAA) are extracellular. Residues 137–157 (VSASFLFLIACLNIYFLVGAI) traverse the membrane as a helical segment. Residues 158–210 (KQRRSMKRRQALGLPPDEDEGDPSKIYGGGCMVRVVGPILRAVDRPWKMYPVG) are Cytoplasmic-facing. Residues 211–231 (VLFGFGFDTASSIALLAISAI) form a helical membrane-spanning segment. At 232–239 (AQRGPNGD) the chain is on the extracellular side. Residues 240–260 (AISHGKIVILPFLFTAGMSLV) form a helical membrane-spanning segment. Topologically, residues 261 to 382 (DSLDSILMLY…AKANTMSSLS (122 aa)) are cytoplasmic. A helical membrane pass occupies residues 383 to 403 (IILTLLSILVALSISLIEIMG). The Extracellular portion of the chain corresponds to 404 to 439 (LIGDNCTQCQDAANDPDGGGLAGSWWRAWARANDQS). N408 is a glycosylation site (N-linked (GlcNAc...) asparagine). The chain crosses the membrane as a helical span at residues 440–460 (GYIGAAIVGCFAAILAGWYGA). The Cytoplasmic portion of the chain corresponds to 461–492 (KWGKKKWKARRDANAAIVLEDNEDDAAETPVA).

This sequence belongs to the NiCoT transporter (TC 2.A.52) family.

It is found in the cell membrane. High-affinity nickel-specific transporter responsible for nickel uptake and required for high levels of activity of urease URE1. Does not transport cobalt. Plays a role in host brain invasion. The chain is High-affinity nickel transport protein from Cryptococcus neoformans var. grubii serotype A (strain H99 / ATCC 208821 / CBS 10515 / FGSC 9487) (Filobasidiella neoformans var. grubii).